A 161-amino-acid chain; its full sequence is Ubiquitin-conjugating enzyme E2Q-like protein 1 (161 aa).

The UBC core domain maps to 1 to 154 (MKELQDIARL…VKTHEKYGWV (154 aa)). Catalysis depends on C88, which acts as the Glycyl thioester intermediate.

This sequence belongs to the ubiquitin-conjugating enzyme family. In terms of assembly, interacts with FBXW7.

The protein localises to the nucleus. The enzyme catalyses S-ubiquitinyl-[E1 ubiquitin-activating enzyme]-L-cysteine + [E2 ubiquitin-conjugating enzyme]-L-cysteine = [E1 ubiquitin-activating enzyme]-L-cysteine + S-ubiquitinyl-[E2 ubiquitin-conjugating enzyme]-L-cysteine.. The protein operates within protein modification; protein ubiquitination. Its function is as follows. Probable E2 ubiquitin-protein ligase that catalyzes the covalent attachment of ubiquitin to target proteins. May facilitate the monoubiquitination and degradation of MTOR and CCNE1 through interaction with FBXW7. This is Ubiquitin-conjugating enzyme E2Q-like protein 1 (UBE2QL1) from Homo sapiens (Human).